Reading from the N-terminus, the 71-residue chain is Small ribosomal subunit protein bS21 (71 aa).

The protein belongs to the bacterial ribosomal protein bS21 family.

The protein is Small ribosomal subunit protein bS21 of Marinobacter nauticus (strain ATCC 700491 / DSM 11845 / VT8) (Marinobacter aquaeolei).